The primary structure comprises 184 residues: Cytochrome c homolog (184 aa).

Topologically, residues 1 to 10 (MDSFELNKIL) are cytoplasmic. The chain crosses the membrane as a helical; Signal-anchor span at residues 11 to 31 (GAVLGTCLILLVTSFTANALF). Residues 32 to 184 (SPKMPEKPGF…HPKPLPTASK (153 aa)) are Periplasmic-facing. Residues Cys84, Cys87, His88, and Met151 each coordinate heme c.

This sequence belongs to the cytochrome c family. Post-translationally, binds 1 heme c group covalently per subunit.

It localises to the cell membrane. Its function is as follows. May be involved in electron transfer from bc1 complex to aa3. The sequence is that of Cytochrome c homolog (cycM) from Bradyrhizobium diazoefficiens (strain JCM 10833 / BCRC 13528 / IAM 13628 / NBRC 14792 / USDA 110).